Here is a 137-residue protein sequence, read N- to C-terminus: Large ribosomal subunit protein uL16 (137 aa).

It belongs to the universal ribosomal protein uL16 family. Part of the 50S ribosomal subunit.

Functionally, binds 23S rRNA and is also seen to make contacts with the A and possibly P site tRNAs. This is Large ribosomal subunit protein uL16 from Cereibacter sphaeroides (strain ATCC 17025 / ATH 2.4.3) (Rhodobacter sphaeroides).